Here is a 1300-residue protein sequence, read N- to C-terminus: Insulin receptor-related protein (1300 aa).

An N-terminal signal peptide occupies residues 1–26; sequence MAVPALWPWGVHLLMSLLSLGSGLDT. 2 N-linked (GlcNAc...) asparagine glycosylation sites follow: Asn-47 and Asn-100. Intrachain disulfides connect Cys-214–Cys-222, Cys-216–Cys-228, Cys-229–Cys-237, Cys-233–Cys-246, Cys-249–Cys-258, Cys-262–Cys-274, Cys-280–Cys-300, Cys-304–Cys-317, and Cys-320–Cys-324. A glycan (N-linked (GlcNAc...) asparagine) is linked at Asn-311. Residues Asn-411, Asn-492, Asn-528, Asn-616, Asn-634, Asn-756, Asn-885, and Asn-898 are each glycosylated (N-linked (GlcNAc...) asparagine). 2 consecutive Fibronectin type-III domains span residues 483-603 and 607-707; these read QTRT…TLPA and VPQD…AQEV. The cysteines at positions 657 and 864 are disulfide-linked. Residues 747–921 are Extracellular-facing; the sequence is EAGLLRLGKN…LEEEDTGGMR (175 aa). Residues 818-913 form the Fibronectin type-III 3 domain; sequence IPGKVAWKAA…GVTFYITDLE (96 aa). Residues 922–943 form a helical membrane-spanning segment; the sequence is IFLTVTPVGFMLLVTLAALGFF. The Cytoplasmic segment spans residues 944 to 1300; it reads YSRKRNSTLY…YSAPNGGPGH (357 aa). A Protein kinase domain is found at 979-1254; sequence IAIIRELGQG…RIQDELRPSF (276 aa). Residues 985 to 993 and Lys-1013 contribute to the ATP site; that span reads LGQGSFGMV. Residue Asp-1115 is the Proton acceptor of the active site. 2 positions are modified to phosphotyrosine; by autocatalysis: Tyr-1145 and Tyr-1146. Residues 1273–1300 are disordered; that stretch reads LPTEAEPDSPPTLNGASDYSAPNGGPGH.

This sequence belongs to the protein kinase superfamily. Tyr protein kinase family. Insulin receptor subfamily. As to quaternary structure, probable tetramer of 2 alpha and 2 beta chains linked by disulfide bonds. The alpha chains contribute to the formation of the ligand-binding domain, while the beta chains carry the kinase domain. In terms of processing, autophosphorylated on tyrosine residues between pH 7.9 and pH 10.5. As to expression, highly expressed in the islets as well as in pancreatic beta-cells.

It localises to the membrane. The enzyme catalyses L-tyrosyl-[protein] + ATP = O-phospho-L-tyrosyl-[protein] + ADP + H(+). Functionally, receptor with tyrosine-protein kinase activity. Functions as a pH sensing receptor which is activated by increased extracellular pH. Activates an intracellular signaling pathway that involves IRS1 and AKT1/PKB. This Mus musculus (Mouse) protein is Insulin receptor-related protein (Insrr).